The sequence spans 833 residues: DNA ligase (833 aa).

Residues Asp35–Asp39, Ser84–Leu85, and Glu115 each bind NAD(+). Lys117 serves as the catalytic N6-AMP-lysine intermediate. Positions 138, 175, 292, and 316 each coordinate NAD(+). Zn(2+) contacts are provided by Cys410, Cys413, Cys428, and Cys434. Residues Glu750–Pro833 form the BRCT domain.

Belongs to the NAD-dependent DNA ligase family. LigA subfamily. Mg(2+) is required as a cofactor. Mn(2+) serves as cofactor.

The catalysed reaction is NAD(+) + (deoxyribonucleotide)n-3'-hydroxyl + 5'-phospho-(deoxyribonucleotide)m = (deoxyribonucleotide)n+m + AMP + beta-nicotinamide D-nucleotide.. DNA ligase that catalyzes the formation of phosphodiester linkages between 5'-phosphoryl and 3'-hydroxyl groups in double-stranded DNA using NAD as a coenzyme and as the energy source for the reaction. It is essential for DNA replication and repair of damaged DNA. The chain is DNA ligase from Xanthomonas axonopodis pv. citri (strain 306).